The chain runs to 388 residues: Homeobox protein Hox-A13 (388 aa).

Positions 322–381 (GRKKRVPYTKVQLKELEREYATNKFITKDKRRRISATTNLSERQVTIWFQNRRVKEKKVI) form a DNA-binding region, homeobox.

It belongs to the Abd-B homeobox family. As to quaternary structure, binds DNA as a homodimer. Interacts with MEIS1, MEIS2 and MEIS3.

It is found in the nucleus. Functionally, sequence-specific, AT-rich binding transcription factor which is part of a developmental regulatory system that provides cells with specific positional identities on the anterior-posterior axis. Its function is as follows. Sequence-specific transcription factor which is part of a developmental regulatory system that provides cells with specific positional identities on the anterior-posterior axis. This is Homeobox protein Hox-A13 (HOXA13) from Homo sapiens (Human).